Here is a 158-residue protein sequence, read N- to C-terminus: Kalata-B3/B6 (158 aa).

The N-terminal stretch at 1–22 is a signal peptide; it reads MAKFTKSLVLCLLLAAFVGAFG. The propeptide occupies 23 to 66; that stretch reads AELSEADKANVVNEIAANIQREILKGVKSSETTLTMFLKEMQLK. The cyclopeptide (Gly-Asn) cross-link spans 67 to 96; that stretch reads GLPTCGETCFGGTCNTPGCSCSSWPICTRN. 3 disulfide bridges follow: Cys-71–Cys-85, Cys-75–Cys-87, and Cys-80–Cys-93. Positions 97–121 are excised as a propeptide; it reads GLPKRAGVKSSETTLTMFLKEMQLK. The cyclopeptide (Gly-Asp) cross-link spans 122-151; the sequence is GLPTCGETCFGGTCNTPGCTCDPWPICTRD. Intrachain disulfides connect Cys-126/Cys-140, Cys-130/Cys-142, and Cys-135/Cys-148. A propeptide spanning residues 152–158 is cleaved from the precursor; that stretch reads GLPSAAA.

Belongs to the cyclotide family. Moebius subfamily. Post-translationally, kalata-B3 and kalata-B6 are cyclic peptides.

Functionally, probably participates in a plant defense mechanism. Has hemolytic activity. The chain is Kalata-B3/B6 (OAK2) from Oldenlandia affinis.